The sequence spans 229 residues: Triosephosphate isomerase (229 aa).

6-8 (NLK) is a substrate binding site. The Electrophile role is filled by H85. The Proton acceptor role is filled by E152. Residues G158 and S188 each coordinate substrate.

The protein belongs to the triosephosphate isomerase family. Homodimer.

The protein resides in the cytoplasm. The enzyme catalyses D-glyceraldehyde 3-phosphate = dihydroxyacetone phosphate. It participates in carbohydrate biosynthesis; gluconeogenesis. It functions in the pathway carbohydrate degradation; glycolysis; D-glyceraldehyde 3-phosphate from glycerone phosphate: step 1/1. Functionally, involved in the gluconeogenesis. Catalyzes stereospecifically the conversion of dihydroxyacetone phosphate (DHAP) to D-glyceraldehyde-3-phosphate (G3P). The protein is Triosephosphate isomerase of Campylobacter curvus (strain 525.92).